A 251-amino-acid chain; its full sequence is Triosephosphate isomerase (251 aa).

Residues Asn12 and Lys14 each contribute to the substrate site. Catalysis depends on His96, which acts as the Electrophile. The Proton acceptor role is filled by Glu168.

The protein belongs to the triosephosphate isomerase family. Homodimer.

It is found in the cytoplasm. The protein resides in the glycosome. The enzyme catalyses D-glyceraldehyde 3-phosphate = dihydroxyacetone phosphate. It participates in carbohydrate biosynthesis; gluconeogenesis. The protein operates within carbohydrate degradation; glycolysis; D-glyceraldehyde 3-phosphate from glycerone phosphate: step 1/1. In Leishmania mexicana, this protein is Triosephosphate isomerase.